The following is a 241-amino-acid chain: Pyridoxine 5'-phosphate synthase (241 aa).

N7 lines the 3-amino-2-oxopropyl phosphate pocket. 9–10 (DH) contacts 1-deoxy-D-xylulose 5-phosphate. 3-amino-2-oxopropyl phosphate is bound at residue R18. Residue H43 is the Proton acceptor of the active site. 1-deoxy-D-xylulose 5-phosphate-binding residues include R45 and H50. Catalysis depends on E70, which acts as the Proton acceptor. Residue T100 participates in 1-deoxy-D-xylulose 5-phosphate binding. H191 functions as the Proton donor in the catalytic mechanism. 3-amino-2-oxopropyl phosphate is bound by residues G192 and 213–214 (GH).

It belongs to the PNP synthase family. In terms of assembly, homooctamer; tetramer of dimers.

The protein localises to the cytoplasm. It carries out the reaction 3-amino-2-oxopropyl phosphate + 1-deoxy-D-xylulose 5-phosphate = pyridoxine 5'-phosphate + phosphate + 2 H2O + H(+). The protein operates within cofactor biosynthesis; pyridoxine 5'-phosphate biosynthesis; pyridoxine 5'-phosphate from D-erythrose 4-phosphate: step 5/5. Catalyzes the complicated ring closure reaction between the two acyclic compounds 1-deoxy-D-xylulose-5-phosphate (DXP) and 3-amino-2-oxopropyl phosphate (1-amino-acetone-3-phosphate or AAP) to form pyridoxine 5'-phosphate (PNP) and inorganic phosphate. In Maridesulfovibrio salexigens (strain ATCC 14822 / DSM 2638 / NCIMB 8403 / VKM B-1763) (Desulfovibrio salexigens), this protein is Pyridoxine 5'-phosphate synthase.